The chain runs to 578 residues: Membrane protein insertase YidC (578 aa).

The helical transmembrane segment at 7–27 (FLAIAISLGILLGFQGLYRHF) threads the bilayer. The tract at residues 35-70 (ARTATNAGQGKPNNTLGAVPTDATASQSPPPKEGAR) is disordered. Residues 37–50 (TATNAGQGKPNNTL) show a composition bias toward polar residues. The next 4 membrane-spanning stretches (helical) occupy residues 362-382 (LVGN…AAFY), 436-456 (LPML…FVTI), 491-511 (HISP…TMYL), and 530-550 (FMPI…VIYW).

This sequence belongs to the OXA1/ALB3/YidC family. Type 1 subfamily. In terms of assembly, interacts with the Sec translocase complex via SecD. Specifically interacts with transmembrane segments of nascent integral membrane proteins during membrane integration.

The protein localises to the cell inner membrane. In terms of biological role, required for the insertion and/or proper folding and/or complex formation of integral membrane proteins into the membrane. Involved in integration of membrane proteins that insert both dependently and independently of the Sec translocase complex, as well as at least some lipoproteins. Aids folding of multispanning membrane proteins. This chain is Membrane protein insertase YidC, found in Granulibacter bethesdensis (strain ATCC BAA-1260 / CGDNIH1).